Reading from the N-terminus, the 310-residue chain is Acetylglutamate kinase (310 aa).

Substrate contacts are provided by residues 79-80 (GG), arginine 101, and asparagine 206.

The protein belongs to the acetylglutamate kinase family. ArgB subfamily.

The protein localises to the cytoplasm. It carries out the reaction N-acetyl-L-glutamate + ATP = N-acetyl-L-glutamyl 5-phosphate + ADP. It participates in amino-acid biosynthesis; L-arginine biosynthesis; N(2)-acetyl-L-ornithine from L-glutamate: step 2/4. Catalyzes the ATP-dependent phosphorylation of N-acetyl-L-glutamate. The polypeptide is Acetylglutamate kinase (Rhodospirillum rubrum (strain ATCC 11170 / ATH 1.1.1 / DSM 467 / LMG 4362 / NCIMB 8255 / S1)).